Reading from the N-terminus, the 605-residue chain is Poly [ADP-ribose] polymerase 2-B (605 aa).

Residues asparagine 96–aspartate 122 form a disordered region. The span at aspartate 108–aspartate 122 shows a compositional bias: basic and acidic residues. The 108-residue stretch at alanine 153–phenylalanine 260 folds into the WGR domain. Residues glutamate 250–glutamate 370 form the PARP alpha-helical domain. The PARP catalytic domain maps to histidine 378–glycine 605.

The protein belongs to the ARTD/PARP family.

It localises to the nucleus. It catalyses the reaction NAD(+) + (ADP-D-ribosyl)n-acceptor = nicotinamide + (ADP-D-ribosyl)n+1-acceptor + H(+).. The enzyme catalyses L-aspartyl-[protein] + NAD(+) = 4-O-(ADP-D-ribosyl)-L-aspartyl-[protein] + nicotinamide. The catalysed reaction is L-glutamyl-[protein] + NAD(+) = 5-O-(ADP-D-ribosyl)-L-glutamyl-[protein] + nicotinamide. Functionally, involved in the base excision repair (BER) pathway, by catalyzing the poly(ADP-ribosyl)ation of a limited number of acceptor proteins involved in chromatin architecture and in DNA metabolism. This modification follows DNA damages and appears as an obligatory step in a detection/signaling pathway leading to the reparation of DNA strand breaks. In Oryza sativa subsp. japonica (Rice), this protein is Poly [ADP-ribose] polymerase 2-B (PARP2-B).